Here is a 210-residue protein sequence, read N- to C-terminus: A-kinase-interacting protein 1 (210 aa).

Disordered regions lie at residues 58 to 80 (HLEK…ERPP) and 136 to 162 (QRKD…EASQ).

As to quaternary structure, interacts with PRKACA and RELA. In terms of tissue distribution, expressed at high levels in adult heart and at lower levels in brain, testis, ovary and skeletal muscle. Up-regulated in some breast cancer cell lines. Isoform 1 and isoform 3 are expressed in fetal brain.

It is found in the nucleus. Functionally, enhances NF-kappa-B transcriptional activity by regulating the nuclear localization of the NF-kappa-B subunit RELA and promoting the phosphorylation of RELA by PRKACA. Regulates the effect of the cAMP-dependent protein kinase signaling pathway on the NF-kappa-B activation cascade. The chain is A-kinase-interacting protein 1 (AKIP1) from Homo sapiens (Human).